Consider the following 74-residue polypeptide: Small ribosomal subunit protein uS15 (74 aa).

It belongs to the universal ribosomal protein uS15 family. As to quaternary structure, part of the 30S ribosomal subunit. Forms a bridge to the 50S subunit in the 70S ribosome, contacting the 23S rRNA.

Its function is as follows. One of the primary rRNA binding proteins, it binds directly to 16S rRNA where it helps nucleate assembly of the platform of the 30S subunit by binding and bridging several RNA helices of the 16S rRNA. In terms of biological role, forms an intersubunit bridge (bridge B4) with the 23S rRNA of the 50S subunit in the ribosome. This Onion yellows phytoplasma (strain OY-M) protein is Small ribosomal subunit protein uS15.